The following is a 257-amino-acid chain: NAD-dependent protein deacetylase (257 aa).

In terms of domain architecture, Deacetylase sirtuin-type spans 3 to 252 (NGECLEGGRK…DLVLNEVKGI (250 aa)). Residues alanine 29, threonine 33, phenylalanine 40, arginine 41, glutamine 105, isoleucine 107, aspartate 108, and histidine 123 each contribute to the NAD(+) site. Residue phenylalanine 40 coordinates nicotinamide. Nicotinamide contacts are provided by isoleucine 107 and aspartate 108. The Proton acceptor role is filled by histidine 123. Zn(2+)-binding residues include cysteine 131, cysteine 134, cysteine 156, and cysteine 159. NAD(+)-binding residues include serine 195, serine 196, and asparagine 220.

Belongs to the sirtuin family. Class U subfamily. It depends on Zn(2+) as a cofactor.

It is found in the cytoplasm. The catalysed reaction is N(6)-acetyl-L-lysyl-[protein] + NAD(+) + H2O = 2''-O-acetyl-ADP-D-ribose + nicotinamide + L-lysyl-[protein]. NAD-dependent protein deacetylase which modulates the activities of several enzymes which are inactive in their acetylated form. Deacetylates the N-terminal lysine residue of Alba, the major archaeal chromatin protein and that, in turn, increases Alba's DNA binding affinity, thereby repressing transcription. This is NAD-dependent protein deacetylase from Caldivirga maquilingensis (strain ATCC 700844 / DSM 13496 / JCM 10307 / IC-167).